A 337-amino-acid polypeptide reads, in one-letter code: Phosphate acyltransferase (337 aa).

Belongs to the PlsX family. Homodimer. Probably interacts with PlsY.

The protein resides in the cytoplasm. It catalyses the reaction a fatty acyl-[ACP] + phosphate = an acyl phosphate + holo-[ACP]. It participates in lipid metabolism; phospholipid metabolism. Functionally, catalyzes the reversible formation of acyl-phosphate (acyl-PO(4)) from acyl-[acyl-carrier-protein] (acyl-ACP). This enzyme utilizes acyl-ACP as fatty acyl donor, but not acyl-CoA. The sequence is that of Phosphate acyltransferase from Polynucleobacter asymbioticus (strain DSM 18221 / CIP 109841 / QLW-P1DMWA-1) (Polynucleobacter necessarius subsp. asymbioticus).